Here is a 551-residue protein sequence, read N- to C-terminus: Chaperonin GroEL (551 aa).

ATP contacts are provided by residues 29–32 (TMGP), Lys-50, 86–90 (DGTTT), Gly-414, 478–480 (NAA), and Asp-494.

Belongs to the chaperonin (HSP60) family. As to quaternary structure, forms a cylinder of 14 subunits composed of two heptameric rings stacked back-to-back. Interacts with the co-chaperonin GroES.

Its subcellular location is the cytoplasm. It catalyses the reaction ATP + H2O + a folded polypeptide = ADP + phosphate + an unfolded polypeptide.. In terms of biological role, together with its co-chaperonin GroES, plays an essential role in assisting protein folding. The GroEL-GroES system forms a nano-cage that allows encapsulation of the non-native substrate proteins and provides a physical environment optimized to promote and accelerate protein folding. This is Chaperonin GroEL from Legionella jeonii.